An 876-amino-acid polypeptide reads, in one-letter code: AP-1 complex subunit gamma-1 (876 aa).

HEAT repeat units follow at residues 97–135 (DERQ…ICSA), 136–173 (EMAR…KVPD), 248–284 (FLHI…KTES), 308–345 (SLRV…FDDQ), 346–382 (AVQR…ENNV), 384–417 (QLTK…KFSP), 418–454 (EKLW…NASE), 506–545 (VTES…RFPS), and 560–599 (SLLL…ATFN). Residues 756–873 (PAYAPIVAYE…LEEGQVSNFP (118 aa)) enclose the GAE domain.

Belongs to the adaptor complexes large subunit family. As to quaternary structure, adaptor protein complex 1 (AP-1) is a heterotetramer composed of two large adaptins (gamma-type subunit and beta-type subunit), a medium adaptin (mu-type subunit) and a small adaptin (sigma-type subunit). Binds to EPSIN1. Interacts with DRP2A/ADL6 (via C-terminus).

The protein resides in the golgi apparatus. It is found in the cytoplasmic vesicle. The protein localises to the clathrin-coated vesicle membrane. Functionally, subunit of clathrin-associated adaptor protein complex 1 that plays a role in protein sorting at the trans-Golgi network and early endosomes (TGN/EE). The AP complexes mediate both the recruitment of clathrin to membranes and the recognition of sorting signals within the cytosolic tails of transmembrane cargo molecules. The protein is AP-1 complex subunit gamma-1 (GAMMA-ADR) of Arabidopsis thaliana (Mouse-ear cress).